The following is a 222-amino-acid chain: MLCRAACSTSRKLVPALGSLGSRQKHSLPDLQYDYGALEPYINAQIMQLHHSKHHAAYVNNLNVTEEKYQEALAKGDVTAQIALQPALKFNGGGHINHTIFWTNLSPNGGGEPKGKLLDAIKRDFGSFDKFKEKLTAVSAGVQGSGWGWLGFNKDQGRLQIVACPNQDPLQGTTGLIPLLGIDVWEHAYYLQYKNVRPDYLKAIWNVINWENVSERYMACKK.

The transit peptide at 1–24 directs the protein to the mitochondrion; that stretch reads MLCRAACSTSRKLVPALGSLGSRQ. Mn(2+) is bound at residue H50. Y58 is modified (3'-nitrotyrosine). N6-acetyllysine; alternate is present on residues K68 and K75. N6-succinyllysine; alternate occurs at positions 68 and 75. H98 serves as a coordination point for Mn(2+). Residue K114 is modified to N6-acetyllysine. Residues K122 and K130 each carry the N6-acetyllysine; alternate modification. N6-succinyllysine; alternate occurs at positions 122 and 130. Residues D183 and H187 each coordinate Mn(2+). The residue at position 202 (K202) is an N6-acetyllysine.

It belongs to the iron/manganese superoxide dismutase family. In terms of assembly, homotetramer. Mn(2+) serves as cofactor. Post-translationally, nitrated under oxidative stress. Nitration coupled with oxidation inhibits the catalytic activity. Acetylation at Lys-122 decreases enzymatic activity. Deacetylated by SIRT3 upon exposure to ionizing radiations or after long fasting. In terms of processing, polyubiquitinated; leading to proteasomal degradation. Deubiquitinated by USP36 which increases protein stability.

It is found in the mitochondrion matrix. The enzyme catalyses 2 superoxide + 2 H(+) = H2O2 + O2. Its function is as follows. Destroys superoxide anion radicals which are normally produced within the cells and which are toxic to biological systems. The protein is Superoxide dismutase [Mn], mitochondrial (SOD2) of Equus caballus (Horse).